We begin with the raw amino-acid sequence, 110 residues long: Nucleoid-associated protein RALTA_A1934 (110 aa).

The span at 88–98 shows a compositional bias: polar residues; the sequence is TTQEKMGSMTS. The tract at residues 88 to 110 is disordered; sequence TTQEKMGSMTSGLPLPPGFKLPF. A compositionally biased stretch (pro residues) spans 101-110; that stretch reads PLPPGFKLPF.

It belongs to the YbaB/EbfC family. In terms of assembly, homodimer.

It is found in the cytoplasm. Its subcellular location is the nucleoid. Its function is as follows. Binds to DNA and alters its conformation. May be involved in regulation of gene expression, nucleoid organization and DNA protection. The chain is Nucleoid-associated protein RALTA_A1934 from Cupriavidus taiwanensis (strain DSM 17343 / BCRC 17206 / CCUG 44338 / CIP 107171 / LMG 19424 / R1) (Ralstonia taiwanensis (strain LMG 19424)).